Consider the following 302-residue polypeptide: MPLSSEQLAEIDAQRAHTAPTRRVVSPGMESHLYRAHPVLDHGFVRVIDYMGDDAAICQAARVSYGTGTKSVQNDEGLIRYLMRHWHSTPFEMCELKLHVKLPVFVARQWIRHRTANVNEYSARYSILDREFYIPAPEHVAAQSAVNNQGRGEALQGEEAARVLEILKADSARCYDNYEAMIGQEGQQGLARELARMNLPANIYTQWYWKVDLHNLFHFLRLRADAHAQYEIRVYAETMCRLVADWVPFAYKAFEDYRLGAVNLSAQMVDSLRRMLAGEAVTQETSGLSAREWREFQDVIGR.

One can recognise a ThyX domain in the interval 43–257 (GFVRVIDYMG…PFAYKAFEDY (215 aa)). FAD is bound by residues Thr-89, 112–114 (RHR), and Glu-120. Residues 109-112 (QWIR), 120-124 (EYSAR), and Arg-196 each bind dUMP. Residues 112–122 (RHRTANVNEYS) carry the ThyX motif motif. Residues 212-214 (DLH) and His-218 each bind FAD. A dUMP-binding site is contributed by Arg-223. The Involved in ionization of N3 of dUMP, leading to its activation role is filled by Arg-223.

This sequence belongs to the thymidylate synthase ThyX family. As to quaternary structure, homotetramer. It depends on FAD as a cofactor.

It catalyses the reaction dUMP + (6R)-5,10-methylene-5,6,7,8-tetrahydrofolate + NADPH + H(+) = dTMP + (6S)-5,6,7,8-tetrahydrofolate + NADP(+). Its pathway is pyrimidine metabolism; dTTP biosynthesis. Catalyzes the reductive methylation of 2'-deoxyuridine-5'-monophosphate (dUMP) to 2'-deoxythymidine-5'-monophosphate (dTMP) while utilizing 5,10-methylenetetrahydrofolate (mTHF) as the methyl donor, and NADPH and FADH(2) as the reductant. The chain is Flavin-dependent thymidylate synthase from Ruegeria pomeroyi (strain ATCC 700808 / DSM 15171 / DSS-3) (Silicibacter pomeroyi).